The primary structure comprises 467 residues: Uronate isomerase (467 aa).

It belongs to the metallo-dependent hydrolases superfamily. Uronate isomerase family.

It catalyses the reaction D-glucuronate = D-fructuronate. The catalysed reaction is aldehydo-D-galacturonate = keto-D-tagaturonate. Its pathway is carbohydrate metabolism; pentose and glucuronate interconversion. In Haemophilus influenzae (strain PittGG), this protein is Uronate isomerase.